A 24-amino-acid chain; its full sequence is Arginine attenuator peptide (24 aa).

This sequence belongs to the arginine attenuator peptide family.

In terms of biological role, arginine attenuator peptide (AAP) that has a regulatory role in the production of arginine-specific carbamoyl phosphate synthetase. Encoded by an upstream open reading frame (uORF) within the 5'-leader region of arginine-specific carbamoyl phosphate synthetase small chain (arg-2) mRNA, it attenuates the translation of the downstream arg-2 ORF. In the presence of high concentrations of arginine, ribosomes translating the uORF encoding AAP stall at the termination codon, resulting in reduced translation from the downstream arg-2 initiation codon. The chain is Arginine attenuator peptide from Neurospora crassa (strain ATCC 24698 / 74-OR23-1A / CBS 708.71 / DSM 1257 / FGSC 987).